The sequence spans 562 residues: NAD-dependent malic enzyme (562 aa).

Catalysis depends on Tyr-101, which acts as the Proton donor. Residue Arg-154 participates in NAD(+) binding. The active-site Proton acceptor is Lys-172. Residues Glu-243, Asp-244, and Asp-267 each contribute to the a divalent metal cation site. Residues Asp-267 and Asn-415 each contribute to the NAD(+) site.

It belongs to the malic enzymes family. In terms of assembly, homotetramer. It depends on Mg(2+) as a cofactor. Requires Mn(2+) as cofactor.

The catalysed reaction is (S)-malate + NAD(+) = pyruvate + CO2 + NADH. It catalyses the reaction oxaloacetate + H(+) = pyruvate + CO2. This Shewanella sp. (strain ANA-3) protein is NAD-dependent malic enzyme.